Reading from the N-terminus, the 391-residue chain is Rhizopuspepsin-3 (391 aa).

Positions 1-21 are cleaved as a signal peptide; the sequence is MKFTLISSCVTLALMTLSIEA. Residues 22–68 constitute a propeptide, activation peptide; sequence APSGKKVNIPLTKNKDYKPNAKNAIQKAIAKYHRHRSVSSSNSTSTD. The region spanning 84–388 is the Peptidase A1 domain; that stretch reads YYGEVTVGTP…NPEVPHVQIA (305 aa). The active site involves D102. The cysteines at positions 115 and 118 are disulfide-linked. Residue D285 is part of the active site. An intrachain disulfide couples C319 to C352.

It belongs to the peptidase A1 family.

It carries out the reaction Hydrolysis of proteins with broad specificity similar to that of pepsin A, preferring hydrophobic residues at P1 and P1'. Clots milk and activates trypsinogen. Does not cleave 4-Gln-|-His-5, but does cleave 10-His-|-Leu-11 and 12-Val-|-Glu-13 in B chain of insulin.. In Rhizopus niveus, this protein is Rhizopuspepsin-3.